Here is a 571-residue protein sequence, read N- to C-terminus: Leiomodin-3 (571 aa).

Disordered stretches follow at residues 1-29 (MSGH…NLSP), 46-67 (PHLP…GNFN), and 91-228 (PVSF…AKLD). A compositionally biased stretch (acidic residues) spans 10–23 (QEDTLSEELDEDEL). Positions 94-105 (FVQSEKNTQNQR) are enriched in polar residues. The segment covering 119–134 (LKEKLNSEILAKKRES) has biased composition (basic and acidic residues). The span at 142-179 (EAEDDDEDEEEEEEDDEDEEEEEEDEEDDEGEEDEDGE) shows a compositional bias: acidic residues. Positions 180–192 (QANREKNDAKEQI) are enriched in basic and acidic residues. Over residues 193–204 (HNNPGTYQQLAT) the composition is skewed to polar residues. Positions 206-228 (TAHEQKDTSETKEKGEKKIAKLD) are enriched in basic and acidic residues. A coiled-coil region spans residues 397 to 436 (VTNLLTRNQDKRRQKRQEEQQQQQLKEQRKLIAMLENGLG). Residues 545–564 (PRDQLLNDIRHSNVAYLKPV) form the WH2 domain.

This sequence belongs to the tropomodulin family. May interact with tropomyosin alpha (TPM1/2) N-terminus. Interacts with KLHL40; leading to stabilization. Ubiquitinated, leading to its degradation. Interaction with KLHL40 negatively regulates ubiquitination and degradation. Skeletal muscle and heart-specific (at protein level).

It is found in the cytoplasm. The protein localises to the myofibril. Its subcellular location is the sarcomere. The protein resides in the a band. It localises to the m line. It is found in the cytoskeleton. In terms of biological role, essential for the organization of sarcomeric actin thin filaments in skeletal muscle. Increases the rate of actin polymerization. The chain is Leiomodin-3 from Mus musculus (Mouse).